The following is a 200-amino-acid chain: Recombination protein RecR (200 aa).

A C4-type zinc finger spans residues 57–72 (CRQCRTLTEDDLCPQC). The Toprim domain maps to 80 to 175 (TLLCVVEGPM…IASRIAHGVP (96 aa)).

This sequence belongs to the RecR family.

In terms of biological role, may play a role in DNA repair. It seems to be involved in an RecBC-independent recombinational process of DNA repair. It may act with RecF and RecO. This Pseudomonas fluorescens (strain Pf0-1) protein is Recombination protein RecR.